A 376-amino-acid polypeptide reads, in one-letter code: Protein RecA (376 aa).

ATP is bound at residue 65 to 72 (GPESSGKT). The disordered stretch occupies residues 316–376 (EHDEIFTSVR…GDDLSDDDIY (61 aa)). The segment covering 331–350 (GEKKDSDEDPGDNKKSKDSA) has biased composition (basic and acidic residues). Residues 366–376 (PGDDLSDDDIY) show a composition bias toward acidic residues.

The protein belongs to the RecA family.

It localises to the cytoplasm. Its function is as follows. Can catalyze the hydrolysis of ATP in the presence of single-stranded DNA, the ATP-dependent uptake of single-stranded DNA by duplex DNA, and the ATP-dependent hybridization of homologous single-stranded DNAs. It interacts with LexA causing its activation and leading to its autocatalytic cleavage. The protein is Protein RecA of Oenococcus oeni (strain ATCC BAA-331 / PSU-1).